Here is a 493-residue protein sequence, read N- to C-terminus: Transcript termination protein A18 (493 aa).

Positions 100–256 (MIELKRPLYI…NSIINIAKLS (157 aa)) constitute a Helicase ATP-binding domain. Residue 113–120 (LACGFGKT) coordinates ATP. Residues 206–209 (DESH) carry the DESH box motif.

The protein belongs to the helicase family. Poxviruses subfamily. In terms of assembly, interacts with G2. Might be part of a transcription complex composed at least of G2, A18, and H5.

The protein resides in the virion. DNA helicase which seems to act as a postreplicative transcription termination factor. Involved in ATP-dependent release of nascent RNA. Forms a stable complex with single-stranded DNA, and to a lesser extent RNA. The sequence is that of Transcript termination protein A18 from Cowpox virus (strain GRI-90 / Grishak) (CPV).